We begin with the raw amino-acid sequence, 649 residues long: Leucine-rich repeat transmembrane protein FLRT3 (649 aa).

The N-terminal stretch at 1–28 (MISPAWSLFLIGTKIGLFFQVAPLSVMA) is a signal peptide. The LRRNT domain maps to 29 to 58 (KSCPSVCRCDAGFIYCNDRSLTSIPVGIPE). Residues 29–528 (KSCPSVCRCD…KEPYKNPNLP (500 aa)) lie on the Extracellular side of the membrane. 2 disulfides stabilise this stretch: C31–C37 and C35–C44. An interaction with ADGRL3 region spans residues 38–67 (DAGFIYCNDRSLTSIPVGIPEDATTLYLQN). LRR repeat units follow at residues 59-80 (DATT…SDLK), 84-104 (KVQR…NLPK), 105-126 (YVKE…SLSK), 129-150 (YLEE…EGAF), 155-176 (YLRL…LPRT), 177-197 (IEEL…SLHG), 200-220 (SLKR…GDKV), 226-247 (NLTE…LPGT), 248-269 (SLRK…AFSY), and 272-293 (QLYR…IFDD). The N-linked (GlcNAc...) asparagine glycan is linked to N226. N-linked (GlcNAc...) asparagine glycosylation is found at N282 and N296. An LRRCT domain is found at 305 to 357 (NPWYCGCKMKWVRDWLQSLPVKVNVRGLMCQAPEKVRGMAIKDLSAELFDCKD). The cysteines at positions 309 and 334 are disulfide-linked. The segment at 378–405 (QGQWPAPVTKQPDIKNPKLTKDQRTTGS) is disordered. Over residues 389–401 (PDIKNPKLTKDQR) the composition is skewed to basic and acidic residues. Positions 405 to 504 (SPSRKTILIT…VCIETQTAPL (100 aa)) constitute a Fibronectin type-III domain. Residues 529–549 (LAAIIGGAVALVSIALLALVC) form a helical membrane-spanning segment. The Cytoplasmic portion of the chain corresponds to 550-649 (WYVHRNGSLF…GIPDLDHSHS (100 aa)). The segment at 629–649 (ESSSNRSYRDSGIPDLDHSHS) is disordered.

In terms of assembly, monomer and homodimer. Self-associates (via leucine-rich repeats), giving rise to homooligomers. Interacts with FGFR1. Interacts (via extracellular domain) with ADGRL1/LPHN1 and ADGRL3 (via olfactomedin-like domain). Interacts (via extracellular domain) with LPHN2 (via olfactomedin-like domain). Interacts (via extracellular domain) with UNC5B (via Ig domain). May also interact (via extracellular domain) with UNC5A and UNC5C. Interacts (via extracellular domain) with UNC5D (via extracellular domain). Identified in complexes composed of FLRT3, ADGRL3 and UNC5B, respectively FLRT3, ADGRL3 and UNC5D. Interacts (via cytoplasmic domain) with ROBO1. N-glycosylated. In terms of processing, proteolytic cleavage in the juxtamembrane region gives rise to a soluble ectodomain. Cleavage is probably effected by a metalloprotease. As to expression, detected in brain (at protein level). Detected in brain neurons, especially in basal ganglia, hippocampus dentate gyrus and CA3 region, cerebellum and in olfactory bulb.

It localises to the cell membrane. The protein localises to the presynaptic cell membrane. The protein resides in the synapse. It is found in the synaptosome. Its subcellular location is the postsynaptic density. It localises to the cell projection. The protein localises to the dendrite. The protein resides in the axon. It is found in the growth cone membrane. Its subcellular location is the cytoplasmic vesicle. It localises to the endoplasmic reticulum membrane. The protein localises to the cell junction. The protein resides in the focal adhesion. It is found in the secreted. Functionally, functions in cell-cell adhesion, cell migration and axon guidance, exerting an attractive or repulsive role depending on its interaction partners. Plays a role in the spatial organization of brain neurons. Plays a role in vascular development in the retina. Plays a role in cell-cell adhesion via its interaction with ADGRL3 and probably also other latrophilins that are expressed at the surface of adjacent cells. Interaction with the intracellular domain of ROBO1 mediates axon attraction towards cells expressing NTN1. Mediates axon growth cone collapse and plays a repulsive role in neuron guidance via its interaction with UNC5B, and possibly also other UNC-5 family members. Promotes neurite outgrowth (in vitro). Mediates cell-cell contacts that promote an increase both in neurite number and in neurite length. Plays a role in the regulation of the density of glutamaergic synapses. Plays a role in fibroblast growth factor-mediated signaling cascades. Required for normal morphogenesis during embryonic development, but not for normal embryonic patterning. Required for normal ventral closure, headfold fusion and definitive endoderm migration during embryonic development. Required for the formation of a normal basement membrane and the maintenance of a normal anterior visceral endoderm during embryonic development. In Rattus norvegicus (Rat), this protein is Leucine-rich repeat transmembrane protein FLRT3 (Flrt3).